The following is a 147-amino-acid chain: MVHFTAEEKAAITSIWDKVDLEKAGGETLGRLLIVYPWTQRFFEKFGNLSPPQAIMGNPRIRAHGKKVLTSLGLAVQNMDNLKETFAHLSELHCDKLHVDPENFKLLGNMLVIVLSSHLGKEFTAEVQAAWQKLVAAVANALSLKYH.

One can recognise a Globin domain in the interval His3 to His147. His64 and His93 together coordinate heme b.

Belongs to the globin family. As to quaternary structure, heterotetramer of two alpha chains and two beta chains.

Functionally, this is a minor early embryonic beta chain. The chain is Hemoglobin subunit beta-Y (HBBY) from Mesocricetus auratus (Golden hamster).